Reading from the N-terminus, the 910-residue chain is MSLPLTEEQRKKIEENRQKALARRAEKLSEQPQSAASGSSAAGPSQSKQGSLLNLLAEPSKPVGHASIFKQQNLSNSFPTDQRPHSSRCSQPSPAEETTGLWKTQGEMSTACPKPNPSPPGASNQPLLGYKSSEGQPQATWDTGASSSGPFPRDPELEAKAARPSTSRQSISDSFYVLGGKTPRTEGRPPNILQTTPQNTGFLRGACIKTGDRFRVKIGYNQELIAVFKSLPSRHYDSFTKTWDFSMSDYRALMKAVERLSTVSLKPLDEAGGSVGGQTSLPSAPSLTFVTGKCMLISRVRFEVDIGYSEAVIGLFKQMESRSYDIKTRKWSFLLEEHNKLIARSRELKQVQLDPLPKTVTLAFASQLEKTSPKLKADVPEADLSGVDAKLVSSLMPFQREGVSFAISKRGRLLLADDMGLGKTVQAICIAAFYRKEWPLLVVVPSSVRFTWEQAFLRWLPSLSPENINVVVTGKGRLTAGLVNIVSFDLLCKLERQLKTPFKVVIIDESHFLKNIKTARCRAAVPILKVAKRVILLSGTPAMSRPAELYTQIIAVKPTFFPQFHAFGLRYCDAKRLPWGWDYSGSSNLGELKLLLEEAIMLRRLKSDVLSQLPAKQRKMVVVNPGRISSRAKAALDAAAKEMTKDKTKQQQKEALLVFFNRTAEAKIPCVVEYILDLLDSGREKFLVFAHHKVILDAVAKELERKNVQHIRIDGSTPSADREAQCQRFQLSKGHTVALLSITAANMGLTFSTADLVVFAELFWNPGVLIQAEDRVHRIGQTNSVSIHYLVAKGTADDYLWPLIQEKIKVLGEAGLSETNFSEMTEATDYVHKDPKQKTIYDLFQQSFEDDGNDMEFLEAAESFELGSTSGTSGNISQDLGDLLDEDEGSPPKKSRFEFFDNWDSFSSPF.

The tract at residues 1 to 198 (MSLPLTEEQR…PPNILQTTPQ (198 aa)) is disordered. At Ser-2 the chain carries N-acetylserine. 2 mediates interaction with RPA2 regions span residues 2–29 (SLPLTEEQRKKIEENRQKALARRAEKLS) and 5–29 (LTEEQRKKIEENRQKALARRAEKLS). A coiled-coil region spans residues 3–34 (LPLTEEQRKKIEENRQKALARRAEKLSEQPQS). Basic and acidic residues predominate over residues 7–29 (EEQRKKIEENRQKALARRAEKLS). Over residues 31–51 (QPQSAASGSSAAGPSQSKQGS) the composition is skewed to low complexity. Polar residues predominate over residues 69-80 (FKQQNLSNSFPT). At Ser-118 the chain carries Phosphoserine. Polar residues-rich tracts occupy residues 133–149 (SEGQPQATWDTGASSSG) and 164–173 (PSTSRQSISD). Ser-165 carries the phosphoserine modification. 2 consecutive HARP domains span residues 199–269 (NTGF…KPLD) and 286–357 (SLTF…DPLP). The Helicase ATP-binding domain occupies 404–559 (SFAISKRGRL…YTQIIAVKPT (156 aa)). 417-424 (DDMGLGKT) is an ATP binding site. Positions 508–511 (DESH) match the DESH box motif. Residues 603–620 (RRLKSDVLSQLPAKQRKM) carry the Nuclear localization signal motif. Residues 674–827 (YILDLLDSGR…ETNFSEMTEA (154 aa)) enclose the Helicase C-terminal domain. Positions 868–878 (STSGTSGNISQ) are enriched in polar residues. Positions 868 to 896 (STSGTSGNISQDLGDLLDEDEGSPPKKSR) are disordered.

The protein belongs to the SNF2/RAD54 helicase family. SMARCAL1 subfamily. As to quaternary structure, interacts with RPA2; the interaction is direct and mediates the recruitment by the RPA complex of SMARCAL1 to sites of DNA damage. Post-translationally, DNA damage-regulated phosphorylation by kinases that may include ATM, ATR and PRKDC. In terms of tissue distribution, ubiquitously expressed, with high levels in brain, heart, kidney, liver and testis.

The protein localises to the nucleus. The catalysed reaction is ATP + H2O = ADP + phosphate + H(+). In terms of biological role, ATP-dependent annealing helicase that binds selectively to fork DNA relative to ssDNA or dsDNA and catalyzes the rewinding of the stably unwound DNA. Rewinds single-stranded DNA bubbles that are stably bound by replication protein A (RPA). Acts throughout the genome to reanneal stably unwound DNA, performing the opposite reaction of many enzymes, such as helicases and polymerases, that unwind DNA. May play an important role in DNA damage response by acting at stalled replication forks. The sequence is that of SWI/SNF-related matrix-associated actin-dependent regulator of chromatin subfamily A-like protein 1 (Smarcal1) from Mus musculus (Mouse).